Reading from the N-terminus, the 348-residue chain is MIKVGIIGATGYAGNELVRLLLGHKDAEIVWLGSRSYIDQNYSDVYRNMFKLVDAKCMDDNMEQLANEVDVIFTATPQGLCASLVNDEILSKTKIIDLSADFRLKDVNVYEQWYKLEHKAPQYIDEAVYGLCEINRDKVSKDTRIIANPGCYTTTSILTLYPMVKEGIINPDTIIIDAKSGTSGAGRGAKVANLFCEVNESMKAYGVGTHRHTPEIEEQLGYACGRDDLKLIFTPHLVPMNRGILVTAYANLAKDVTYEDVKAAYDKYYDKEYFVRVLPKDVCPETRWVEGSNFVDIGFKIEPRTNRLIMMGALDNLVKGAAGQAVQNMNLLFGLPENEGLQIAPMFP.

The active site involves cysteine 151.

Belongs to the NAGSA dehydrogenase family. Type 1 subfamily.

It is found in the cytoplasm. The enzyme catalyses N-acetyl-L-glutamate 5-semialdehyde + phosphate + NADP(+) = N-acetyl-L-glutamyl 5-phosphate + NADPH + H(+). The protein operates within amino-acid biosynthesis; L-arginine biosynthesis; N(2)-acetyl-L-ornithine from L-glutamate: step 3/4. Functionally, catalyzes the NADPH-dependent reduction of N-acetyl-5-glutamyl phosphate to yield N-acetyl-L-glutamate 5-semialdehyde. The chain is N-acetyl-gamma-glutamyl-phosphate reductase from Lachnospira eligens (strain ATCC 27750 / DSM 3376 / VPI C15-48 / C15-B4) (Eubacterium eligens).